A 540-amino-acid chain; its full sequence is Ribonuclease Y (540 aa).

Residues 4–24 (TILVPVAVAIVSVLVGGCAGY) form a helical membrane-spanning segment. In terms of domain architecture, KH spans 230–293 (TVSVVNLPND…EIAKRALERL (64 aa)). In terms of domain architecture, HD spans 356 to 449 (VLSHSIEVGK…VVAADTISSA (94 aa)).

This sequence belongs to the RNase Y family.

The protein resides in the cell membrane. Functionally, endoribonuclease that initiates mRNA decay. The polypeptide is Ribonuclease Y (Lactobacillus gasseri (strain ATCC 33323 / DSM 20243 / BCRC 14619 / CIP 102991 / JCM 1131 / KCTC 3163 / NCIMB 11718 / NCTC 13722 / AM63)).